Consider the following 734-residue polypeptide: Photosystem I P700 chlorophyll a apoprotein A2 (734 aa).

A run of 8 helical transmembrane segments spans residues 46–69 (IFAS…FHVA), 135–158 (LYTG…LHLQ), 175–199 (LNHH…HVAI), 273–291 (MAHH…GHMY), 330–353 (IHFQ…QHMY), 369–395 (AALY…IFFI), 417–439 (AIIS…LYVH), and 517–535 (FLVH…LILV). Positions 559 and 568 each coordinate [4Fe-4S] cluster. The next 2 helical transmembrane spans lie at 575–596 (AFYL…YWHW) and 643–665 (LSVW…MFLI). Chlorophyll a is bound by residues His654, Met662, and Tyr670. Trp671 is a phylloquinone binding site. The chain crosses the membrane as a helical span at residues 707–727 (LVGLAHFSVGYIFTYAAFLIA).

Belongs to the PsaA/PsaB family. As to quaternary structure, the PsaA/B heterodimer binds the P700 chlorophyll special pair and subsequent electron acceptors. PSI consists of a core antenna complex that captures photons, and an electron transfer chain that converts photonic excitation into a charge separation. The eukaryotic PSI reaction center is composed of at least 11 subunits. P700 is a chlorophyll a/chlorophyll a' dimer, A0 is one or more chlorophyll a, A1 is one or both phylloquinones and FX is a shared 4Fe-4S iron-sulfur center. is required as a cofactor.

The protein resides in the plastid. It is found in the chloroplast thylakoid membrane. It catalyses the reaction reduced [plastocyanin] + hnu + oxidized [2Fe-2S]-[ferredoxin] = oxidized [plastocyanin] + reduced [2Fe-2S]-[ferredoxin]. Its function is as follows. PsaA and PsaB bind P700, the primary electron donor of photosystem I (PSI), as well as the electron acceptors A0, A1 and FX. PSI is a plastocyanin-ferredoxin oxidoreductase, converting photonic excitation into a charge separation, which transfers an electron from the donor P700 chlorophyll pair to the spectroscopically characterized acceptors A0, A1, FX, FA and FB in turn. Oxidized P700 is reduced on the lumenal side of the thylakoid membrane by plastocyanin. This Lepidium virginicum (Virginia pepperweed) protein is Photosystem I P700 chlorophyll a apoprotein A2.